The sequence spans 760 residues: Histone-lysine N-methyltransferase EZH2 (760 aa).

Disordered regions lie at residues 208–231 (KDDAEDHKEQLSSESHNNDGSKKF) and 356–444 (PERA…PENV). Over residues 361-373 (TPSKRSTGRRRGR) the composition is skewed to basic residues. The span at 375 to 388 (PNSNSRPSTPTVNS) shows a compositional bias: polar residues. A compositionally biased stretch (basic and acidic residues) spans 389–400 (ETKDTDSDREGG). The 103-residue stretch at 517 to 619 (CRKIQLKKDG…SKNVSCKNCS (103 aa)) folds into the CXC domain. The SET domain occupies 626–741 (KHLLLAPSDV…TGEELFFDYR (116 aa)).

This sequence belongs to the class V-like SAM-binding methyltransferase superfamily. Histone-lysine methyltransferase family. EZ subfamily. Component of the prc2/eed-ezh2 complex.

It is found in the nucleus. It catalyses the reaction L-lysyl(27)-[histone H3] + 3 S-adenosyl-L-methionine = N(6),N(6),N(6)-trimethyl-L-lysyl(27)-[histone H3] + 3 S-adenosyl-L-homocysteine + 3 H(+). Polycomb group (PcG) protein. Catalytic subunit of the prc2/eed-ezh2 complex, which methylates 'Lys-9' and 'Lys-27' of histone H3, leading to transcriptional repression of the affected target gene. May regulate the circadian clock via histone methylation at the promoter of the circadian genes. The protein is Histone-lysine N-methyltransferase EZH2 (ezh2) of Danio rerio (Zebrafish).